Consider the following 81-residue polypeptide: Omega-conotoxin-like Vc6.4 (81 aa).

Positions 1-22 are cleaved as a signal peptide; that stretch reads MKLTCVMIVAVLFLTANTFVTA. Residues 23-51 constitute a propeptide that is removed on maturation; the sequence is VPHSSNVLENLYLKARHEMENPEASKLNT. Intrachain disulfides connect Cys55–Cys72, Cys62–Cys76, and Cys71–Cys80.

It belongs to the conotoxin O1 superfamily. Expressed by the venom duct.

It is found in the secreted. In terms of biological role, omega-conotoxins act at presynaptic membranes, they bind and block voltage-gated calcium channels. Act on high voltage-activated (HVA) calcium currents in molluscan neurons. The protein is Omega-conotoxin-like Vc6.4 of Conus victoriae (Queen Victoria cone).